The following is a 1258-amino-acid chain: Phosphatidylinositol 3,4,5-trisphosphate 5-phosphatase 2 (1258 aa).

An SH2 domain is found at 21 to 117 (WYHRDLSRAA…GLVCALLLPV (97 aa)). Residues 119–132 (GEREPDPPDDRDAS) show a composition bias toward basic and acidic residues. A disordered region spans residues 119-180 (GEREPDPPDD…AESAPNGLST (62 aa)). S132 carries the phosphoserine modification. The span at 145 to 155 (SGSTSISAPTG) shows a compositional bias: polar residues. A compositionally biased stretch (pro residues) spans 156-166 (PSSPLPAPETP). The residue at position 165 (T165) is a Phosphothreonine. Residues S241 and S352 each carry the phosphoserine modification. At Y886 the chain carries Phosphotyrosine. At S890 the chain carries Phosphoserine. Positions 897–1118 (GAKSKAPSVS…FLGEVASGDD (222 aa)) are disordered. Residues 938-950 (PPPTGRPPAPPRA) show a composition bias toward pro residues. The SH3-binding signature appears at 944 to 949 (PPAPPR). The segment covering 951-965 (APREEPLTPRLKPEG) has biased composition (basic and acidic residues). T958 bears the Phosphothreonine mark. The NPXY motif motif lies at 983-986 (NPAY). Position 986 is a phosphotyrosine; by SRC (Y986). Composition is skewed to pro residues over residues 996–1007 (LLPPEPPSPARA), 1048–1059 (LPPPDFPPPPLP), and 1087–1104 (GPPPPKAHPRPPLPPGPS). A Phosphoserine modification is found at S1131. Residues Y1135 and Y1162 each carry the phosphotyrosine modification. The region spanning 1196-1258 (LGEAGMSAWL…LLLDTLQLSK (63 aa)) is the SAM domain. Position 1257 is a phosphoserine (S1257).

This sequence belongs to the inositol 1,4,5-trisphosphate 5-phosphatase family. As to quaternary structure, interacts with tyrosine phosphorylated form of SHC1. Interacts with EGFR. Upon stimulation by the EGF signaling pathway, it forms a complex with SHC1 and EGFR. Interacts with cytoskeletal protein SORBS3/vinexin, promoting its localization to the periphery of cells. Forms a complex with filamin (FLNA or FLNB), actin, GPIb (GP1BA or GP1BB) that regulates cortical and submembraneous actin. Interacts with c-Met/MET, when c-Met/MET is phosphorylated on 'Tyr-1356'. Interacts with p130Cas/BCAR1. Interacts with CENTD3/ARAP3 via its SAM domain. Interacts with c-Cbl/CBL and CAP/SORBS1. Interacts with activated EPHA2 receptor. Interacts with receptor FCGR2A. Interacts with receptor FCGR2B. Interacts with tyrosine kinase ABL1. Interacts with tyrosine kinase TEC. Interacts with CSF1R. Interacts (via N-terminus) with SH3YL1 (via SH3 domain). Interacts with FCRL6 (tyrosine phosphorylated form). Interacts (via SH2 domain) with tyrosine phosphorylated KLRC1 (via ITIM). Interacts with NEDD9/HEF1. Post-translationally, tyrosine phosphorylated by the members of the SRC family after exposure to a diverse array of extracellular stimuli such as insulin, growth factors such as EGF or PDGF, chemokines, integrin ligands and hypertonic and oxidative stress. May be phosphorylated upon IgG receptor FCGR2B-binding. Phosphorylated at Tyr-986 following cell attachment and spreading. Phosphorylated at Tyr-1162 following EGF signaling pathway stimulation. Phosphorylated at Thr-958 in response to PDGF. As to expression, widely expressed, most prominently in skeletal muscle, heart and brain. Present in platelets. Expressed in transformed myeloid cells and in primary macrophages, but not in peripheral blood monocytes.

It is found in the cytoplasm. The protein localises to the cytosol. The protein resides in the cytoskeleton. Its subcellular location is the membrane. It localises to the cell projection. It is found in the filopodium. The protein localises to the lamellipodium. The protein resides in the basal cell membrane. Its subcellular location is the nucleus. It localises to the nucleus speckle. It is found in the spindle pole. The catalysed reaction is a 1,2-diacyl-sn-glycero-3-phospho-(1D-myo-inositol-3,4,5-trisphosphate) + H2O = a 1,2-diacyl-sn-glycero-3-phospho-(1D-myo-inositol-3,4-bisphosphate) + phosphate. It carries out the reaction 1,2-dioctanoyl-sn-glycero-3-phospho-(1D-myo-inositol-3,4,5-trisphosphate) + H2O = 1,2-dioctanoyl-sn-glycero-3-phospho-(1D-myo-inositol-3,4-bisphosphate) + phosphate. It catalyses the reaction 1,2-dihexadecanoyl-sn-glycero-3-phospho-(1D-myo-inositol-3,4,5-trisphosphate) + H2O = 1,2-dihexadecanoyl-sn-glycero-3-phospho-(1D-myo-inositol-3,4-bisphosphate) + phosphate. Its activity is regulated as follows. Activated upon translocation to the sites of synthesis of PtdIns(3,4,5)P3 in the membrane. Enzymatic activity is enhanced in the presence of phosphatidylserine. Its function is as follows. Phosphatidylinositol (PtdIns) phosphatase that specifically hydrolyzes the 5-phosphate of phosphatidylinositol-3,4,5-trisphosphate (PtdIns(3,4,5)P3) to produce PtdIns(3,4)P2, thereby negatively regulating the PI3K (phosphoinositide 3-kinase) pathways. Required for correct mitotic spindle orientation and therefore progression of mitosis. Plays a central role in regulation of PI3K-dependent insulin signaling, although the precise molecular mechanisms and signaling pathways remain unclear. While overexpression reduces both insulin-stimulated MAP kinase and Akt activation, its absence does not affect insulin signaling or GLUT4 trafficking. Confers resistance to dietary obesity. May act by regulating AKT2, but not AKT1, phosphorylation at the plasma membrane. Part of a signaling pathway that regulates actin cytoskeleton remodeling. Required for the maintenance and dynamic remodeling of actin structures as well as in endocytosis, having a major impact on ligand-induced EGFR internalization and degradation. Participates in regulation of cortical and submembraneous actin by hydrolyzing PtdIns(3,4,5)P3 thereby regulating membrane ruffling. Regulates cell adhesion and cell spreading. Required for HGF-mediated lamellipodium formation, cell scattering and spreading. Acts as a negative regulator of EPHA2 receptor endocytosis by inhibiting via PI3K-dependent Rac1 activation. Acts as a regulator of neuritogenesis by regulating PtdIns(3,4,5)P3 level and is required to form an initial protrusive pattern, and later, maintain proper neurite outgrowth. Acts as a negative regulator of the FC-gamma-RIIA receptor (FCGR2A). Mediates signaling from the FC-gamma-RIIB receptor (FCGR2B), playing a central role in terminating signal transduction from activating immune/hematopoietic cell receptor systems. Involved in EGF signaling pathway. Upon stimulation by EGF, it is recruited by EGFR and dephosphorylates PtdIns(3,4,5)P3. Plays a negative role in regulating the PI3K-PKB pathway, possibly by inhibiting PKB activity. Down-regulates Fc-gamma-R-mediated phagocytosis in macrophages independently of INPP5D/SHIP1. In macrophages, down-regulates NF-kappa-B-dependent gene transcription by regulating macrophage colony-stimulating factor (M-CSF)-induced signaling. Plays a role in the localization of AURKA and NEDD9/HEF1 to the basolateral membrane at interphase in polarized cysts, thereby mediates cell cycle homeostasis, cell polarization and cilia assembly. Additionally promotion of cilia growth is also facilitated by hydrolysis of (PtdIns(3,4,5)P3) to PtdIns(3,4)P2. Promotes formation of apical membrane-initiation sites during the initial stages of lumen formation via Rho family-induced actin filament organization and CTNNB1 localization to cell-cell contacts. May also hydrolyze PtdIns(1,3,4,5)P4, and could thus affect the levels of the higher inositol polyphosphates like InsP6. Involved in endochondral ossification. This Homo sapiens (Human) protein is Phosphatidylinositol 3,4,5-trisphosphate 5-phosphatase 2.